The sequence spans 467 residues: Ankyrin repeat and SOCS box protein 10 (467 aa).

7 ANK repeats span residues 115–144 (ELTT…RPDS), 147–176 (GGRT…DPNI), 180–209 (DGKR…RVDG), 214–243 (EEET…CPDA), 247–289 (EGWT…DADA), 293–322 (DKQR…SANT), and 326–361 (GGHT…AVRV). The SOCS box domain maps to 412–464 (YSSLFALVRQPRSLQHLSRCALRSHLEGSLPQALPRLPLPPRLLRYLQLDFEG).

The protein belongs to the ankyrin SOCS box (ASB) family. Expressed in the eye. The highest expression is observed in the iris, with moderate levels in the trabecular meshwork (TM), the lamina, and the optic nerve; slightly lower levels in the ciliary body, retina, and choroid; and very low levels in the lens.

It localises to the cytoplasm. Its subcellular location is the nucleus. It functions in the pathway protein modification; protein ubiquitination. In terms of biological role, may be a substrate-recognition component of a SCF-like ECS (Elongin-Cullin-SOCS-box protein) E3 ubiquitin-protein ligase complex which mediates the ubiquitination and subsequent proteasomal degradation of target proteins. This Homo sapiens (Human) protein is Ankyrin repeat and SOCS box protein 10 (ASB10).